Here is a 92-residue protein sequence, read N- to C-terminus: MEYQYPLDLDWTNDEMMKVIHFFNKIENYYEASVKGDEVLNAYKNFKHIVPGKADEKQIFKEFENKSGYNSYKVVQEIKKNPNQTLFSKDFD.

The protein belongs to the UPF0223 family.

This chain is UPF0223 protein SERP0684, found in Staphylococcus epidermidis (strain ATCC 35984 / DSM 28319 / BCRC 17069 / CCUG 31568 / BM 3577 / RP62A).